A 948-amino-acid polypeptide reads, in one-letter code: Bifunctional glutamine synthetase adenylyltransferase/adenylyl-removing enzyme (948 aa).

Residues 1–447 (MLTPDNKLMS…EFQQVVGAES (447 aa)) form an adenylyl removase region. An adenylyl transferase region spans residues 453–948 (EQGLQVLWQD…NCWNHLLEDD (496 aa)).

This sequence belongs to the GlnE family. It depends on Mg(2+) as a cofactor.

The enzyme catalyses [glutamine synthetase]-O(4)-(5'-adenylyl)-L-tyrosine + phosphate = [glutamine synthetase]-L-tyrosine + ADP. It catalyses the reaction [glutamine synthetase]-L-tyrosine + ATP = [glutamine synthetase]-O(4)-(5'-adenylyl)-L-tyrosine + diphosphate. Functionally, involved in the regulation of glutamine synthetase GlnA, a key enzyme in the process to assimilate ammonia. When cellular nitrogen levels are high, the C-terminal adenylyl transferase (AT) inactivates GlnA by covalent transfer of an adenylyl group from ATP to specific tyrosine residue of GlnA, thus reducing its activity. Conversely, when nitrogen levels are low, the N-terminal adenylyl removase (AR) activates GlnA by removing the adenylyl group by phosphorolysis, increasing its activity. The regulatory region of GlnE binds the signal transduction protein PII (GlnB) which indicates the nitrogen status of the cell. In Idiomarina loihiensis (strain ATCC BAA-735 / DSM 15497 / L2-TR), this protein is Bifunctional glutamine synthetase adenylyltransferase/adenylyl-removing enzyme.